Here is a 217-residue protein sequence, read N- to C-terminus: Protein matrimony (217 aa).

A POLO box domain (PBD)-binding motif is present at residues 39–41; sequence STP. 2 positions are modified to phosphoserine: S63 and S66. The segment at 83–106 is disordered; that stretch reads KQQQQQQHQHCHRTQLKPPPFVLP. An SAM domain is found at 157-217; the sequence is NHAANVEQIL…NRIMDVLHTL (61 aa).

Interacts with polo. Interacts with cort. Post-translationally, probably ubiquitinated: degraded during the oocyte-to-embryo transition by the anaphase promoting complex/cyclosome (APC/C) containing cort protein.

The protein localises to the nucleus. It is found in the chromosome. Functionally, polo kinase inhibitor required to maintain G2 arrest in the meiotic cell cycle in females. Holds heterochromatically paired homologs together from the end of pachytene until metaphase I. Haploinsufficient locus for homologous achiasmate segregation and may be required for the maintenance of heterochromatic pairings. In Drosophila melanogaster (Fruit fly), this protein is Protein matrimony.